A 546-amino-acid polypeptide reads, in one-letter code: Amidophosphoribosyltransferase (546 aa).

Positions 1-26 (MSAPQQQQQSQQKQQQHVRVVEQQQV) are enriched in low complexity. The tract at residues 1-39 (MSAPQQQQQSQQKQQQHVRVVEQQQVEPAEAVTSSMESE) is disordered. Positions 1 to 53 (MSAPQQQQQSQQKQQQHVRVVEQQQVEPAEAVTSSMESESISASKELTGLTHE) are excised as a propeptide. Catalysis depends on Cys-54, which acts as the Nucleophile. The Glutamine amidotransferase type-2 domain occupies 54-302 (CGVFGAIACG…PGEIVELSRS (249 aa)). Position 113 is a phosphoserine (Ser-113). Thr-114 is subject to Phosphothreonine. Ser-120 carries the phosphoserine modification. Residue Cys-321 participates in [4Fe-4S] cluster binding. Positions 368, 430, and 431 each coordinate Mg(2+). Cys-467, Cys-528, and Cys-531 together coordinate [4Fe-4S] cluster.

It in the C-terminal section; belongs to the purine/pyrimidine phosphoribosyltransferase family. Mg(2+) is required as a cofactor. Requires [4Fe-4S] cluster as cofactor.

The enzyme catalyses 5-phospho-beta-D-ribosylamine + L-glutamate + diphosphate = 5-phospho-alpha-D-ribose 1-diphosphate + L-glutamine + H2O. It functions in the pathway purine metabolism; IMP biosynthesis via de novo pathway; N(1)-(5-phospho-D-ribosyl)glycinamide from 5-phospho-alpha-D-ribose 1-diphosphate: step 1/2. In terms of biological role, involved in the first step (and regulatory point) of the de novo biosynthesis of purine nucleotides, where it catalyzes the transfer of glutamine amide to 5-phospho-alpha-D-ribose 1-diphosphate. In Drosophila melanogaster (Fruit fly), this protein is Amidophosphoribosyltransferase (Prat).